The primary structure comprises 489 residues: Acetyl-coenzyme A carboxylase carboxyl transferase subunit beta, chloroplastic (489 aa).

A CoA carboxyltransferase N-terminal domain is found at Leu-225 to Lys-489. Zn(2+) contacts are provided by Cys-229, Cys-232, Cys-245, and Cys-248. Residues Cys-229–Cys-248 form a C4-type zinc finger.

The protein belongs to the AccD/PCCB family. Acetyl-CoA carboxylase is a heterohexamer composed of biotin carboxyl carrier protein, biotin carboxylase and 2 subunits each of ACCase subunit alpha and ACCase plastid-coded subunit beta (accD). Zn(2+) serves as cofactor.

It localises to the plastid. The protein resides in the chloroplast stroma. The enzyme catalyses N(6)-carboxybiotinyl-L-lysyl-[protein] + acetyl-CoA = N(6)-biotinyl-L-lysyl-[protein] + malonyl-CoA. Its pathway is lipid metabolism; malonyl-CoA biosynthesis; malonyl-CoA from acetyl-CoA: step 1/1. Its function is as follows. Component of the acetyl coenzyme A carboxylase (ACC) complex. Biotin carboxylase (BC) catalyzes the carboxylation of biotin on its carrier protein (BCCP) and then the CO(2) group is transferred by the transcarboxylase to acetyl-CoA to form malonyl-CoA. The protein is Acetyl-coenzyme A carboxylase carboxyl transferase subunit beta, chloroplastic of Draba nemorosa (Woodland whitlowgrass).